A 542-amino-acid chain; its full sequence is Chaperonin GroEL 3 (542 aa).

ATP is bound by residues Thr-30 to Pro-33, Lys-51, Asp-87 to Thr-91, Gly-415, and Asp-496.

The protein belongs to the chaperonin (HSP60) family. Forms a cylinder of 14 subunits composed of two heptameric rings stacked back-to-back. Interacts with the co-chaperonin GroES.

Its subcellular location is the cytoplasm. The catalysed reaction is ATP + H2O + a folded polypeptide = ADP + phosphate + an unfolded polypeptide.. Its function is as follows. Together with its co-chaperonin GroES, plays an essential role in assisting protein folding. The GroEL-GroES system forms a nano-cage that allows encapsulation of the non-native substrate proteins and provides a physical environment optimized to promote and accelerate protein folding. This is Chaperonin GroEL 3 from Sinorhizobium medicae (strain WSM419) (Ensifer medicae).